Here is a 141-residue protein sequence, read N- to C-terminus: Translation initiation factor IF-1, chloroplastic (141 aa).

The transit peptide at 1–46 (MLQLCSTFRPQLLLPCQFRFTNGVLIPQINYVASNSVVNIRPMIRC) directs the protein to the chloroplast. The interval 49–69 (ASGGRGGANRSKPAKPQVKEG) is disordered. An S1-like domain is found at 63 to 138 (KPQVKEGSNK…TKGRIIFRMS (76 aa)).

It belongs to the IF-1 family. In terms of assembly, component of the 30S ribosomal translation pre-initiation complex which assembles on the 30S ribosome in the order IF-2 and IF-3, IF-1 and N-formylmethionyl-tRNA(fMet); mRNA recruitment can occur at any time during PIC assembly.

The protein localises to the plastid. The protein resides in the chloroplast. One of the essential components for the initiation of protein synthesis. Stabilizes the binding of IF-2 and IF-3 on the 30S subunit to which N-formylmethionyl-tRNA(fMet) subsequently binds. Helps modulate mRNA selection, yielding the 30S pre-initiation complex (PIC). Upon addition of the 50S ribosomal subunit IF-1, IF-2 and IF-3 are released leaving the mature 70S translation initiation complex. This Arabidopsis thaliana (Mouse-ear cress) protein is Translation initiation factor IF-1, chloroplastic.